Here is a 330-residue protein sequence, read N- to C-terminus: Probable WRKY transcription factor 74 (330 aa).

A DNA-binding region (WRKY) is located at residues 256–322 (KIADIPPDEY…YEGEHNHSRI (67 aa)).

The protein localises to the nucleus. Transcription factor. Interacts specifically with the W box (5'-(T)TGAC[CT]-3'), a frequently occurring elicitor-responsive cis-acting element. In Arabidopsis thaliana (Mouse-ear cress), this protein is Probable WRKY transcription factor 74 (WRKY74).